The sequence spans 540 residues: L-aspartate oxidase (540 aa).

FAD-binding positions include 16-19 (SGAA), lysine 38, 45-52 (STFYAQGG), and aspartate 223. Residue arginine 290 is the Proton donor/acceptor of the active site. FAD-binding positions include glutamate 375 and 391 to 392 (SL).

This sequence belongs to the FAD-dependent oxidoreductase 2 family. NadB subfamily. FAD is required as a cofactor.

Its subcellular location is the cytoplasm. It carries out the reaction L-aspartate + O2 = iminosuccinate + H2O2. The enzyme catalyses fumarate + L-aspartate = iminosuccinate + succinate. Its pathway is cofactor biosynthesis; NAD(+) biosynthesis; iminoaspartate from L-aspartate (oxidase route): step 1/1. Its function is as follows. Catalyzes the oxidation of L-aspartate to iminoaspartate, the first step in the de novo biosynthesis of NAD(+). Can use either oxygen or fumarate as electron acceptors, which allows the enzyme to be functional under aerobic and anaerobic conditions. This Escherichia coli O157:H7 protein is L-aspartate oxidase (nadB).